The chain runs to 723 residues: Ribosome quality control complex subunit 1 (723 aa).

The segment at 21–125 (SNSNANKMTS…DKGSDDDDDD (105 aa)) is disordered. Over residues 27-37 (KMTSGKSTAGN) the composition is skewed to polar residues. The span at 93–108 (SSRRKKNKKAKRKQKN) shows a compositional bias: basic residues. Residues 109–118 (HTAEAAKDKG) are compositionally biased toward basic and acidic residues. Ser119 bears the Phosphoserine mark. Thr158 carries the post-translational modification Phosphothreonine. Phosphoserine is present on Ser160.

It belongs to the TCF25 family. In terms of assembly, component of the ribosome quality control complex (RQC), composed of the E3 ubiquitin ligase RKR1/LTN1, RQC1 and RQC2, as well as CDC48 and its ubiquitin-binding cofactors. RQC forms a stable complex with 60S ribosomal subunits.

It localises to the cytoplasm. Component of the ribosome quality control complex (RQC), a ribosome-associated complex that mediates ubiquitination and extraction of incompletely synthesized nascent chains for proteasomal degradation. Within the RQC complex, RQC1 is essential for the recruitment of CDC48 to incompletely synthesized nascent polypeptides that are ubiquitinated by RKR1/LTN1. This Saccharomyces cerevisiae (strain ATCC 204508 / S288c) (Baker's yeast) protein is Ribosome quality control complex subunit 1.